A 92-amino-acid chain; its full sequence is DNA-directed RNA polymerase subunit Rpo11 (92 aa).

The protein belongs to the archaeal Rpo11/eukaryotic RPB11/RPC19 RNA polymerase subunit family. As to quaternary structure, part of the RNA polymerase complex.

The protein resides in the cytoplasm. The catalysed reaction is RNA(n) + a ribonucleoside 5'-triphosphate = RNA(n+1) + diphosphate. Its function is as follows. DNA-dependent RNA polymerase (RNAP) catalyzes the transcription of DNA into RNA using the four ribonucleoside triphosphates as substrates. The chain is DNA-directed RNA polymerase subunit Rpo11 from Saccharolobus islandicus (strain Y.N.15.51 / Yellowstone #2) (Sulfolobus islandicus).